The chain runs to 432 residues: Protein ABHD8 (432 aa).

2 disordered regions span residues 47 to 69 and 121 to 149; these read KHAG…QGDQ and PAGS…RPKR. Residues 52–61 are compositionally biased toward pro residues; the sequence is APAPTPPPPL. Positions 139 to 149 are enriched in basic residues; the sequence is GRRRRARRPKR. The region spanning 170 to 272 is the AB hydrolase-1 domain; the sequence is VLFFIHGVGG…HKVIMINGGG (103 aa). Residues serine 245, aspartate 363, and histidine 391 each act as charge relay system in the active site.

The protein belongs to the AB hydrolase superfamily. Interacts with NLRP3 (via NACHT and LLR domains); this interaction is enhanced in the presence of NLRP3 inflammasome inducers, such as ATP, nigericin, silica, or alum. Interacts with ZDHHC12.

Its subcellular location is the cytoplasm. Negatively regulates NLRP3-driven inflammation. Promotes NLRP3 degradation through the chaperone-mediated autophagy (CMA) pathway, hence attenuating inflammasome activation and IL1B secretion. Acts by recruiting palmitoyltransferase ZDHHC12 to NLRP3, facilitating NLRP3 palmitoylation and subsequent degradation. The protein is Protein ABHD8 of Bos taurus (Bovine).